A 350-amino-acid polypeptide reads, in one-letter code: Galactokinase (350 aa).

14–17 provides a ligand contact to substrate; the sequence is EHTD. ATP is bound by residues serine 46 and 96 to 102; that span reads GAGLSSS. The Mg(2+) site is built by serine 102 and glutamate 134. The active-site Proton acceptor is the aspartate 146. Position 196 (tyrosine 196) interacts with substrate.

This sequence belongs to the GHMP kinase family. GalK subfamily.

It is found in the cytoplasm. The catalysed reaction is alpha-D-galactose + ATP = alpha-D-galactose 1-phosphate + ADP + H(+). It functions in the pathway carbohydrate metabolism; galactose metabolism. Functionally, catalyzes the transfer of the gamma-phosphate of ATP to D-galactose to form alpha-D-galactose-1-phosphate (Gal-1-P). The chain is Galactokinase from Thermotoga maritima (strain ATCC 43589 / DSM 3109 / JCM 10099 / NBRC 100826 / MSB8).